Consider the following 276-residue polypeptide: Melibiose/raffinose/stachyose import permease protein MelC (276 aa).

6 helical membrane passes run 11-31 (IITL…YILL), 74-94 (IITG…AYPL), 104-124 (AVFA…MVPL), 139-159 (IAIF…YSGF), 186-206 (IVFP…CVFI), and 240-260 (LHLV…LFLA). In terms of domain architecture, ABC transmembrane type-1 spans 69-261 (FINTMIITGF…LPMVVLFLAL (193 aa)).

This sequence belongs to the binding-protein-dependent transport system permease family. As to quaternary structure, the complex is composed of two ATP-binding proteins (MsmX), two transmembrane proteins (MelC and MelD) and a solute-binding protein (MelE).

It localises to the cell membrane. Its function is as follows. Part of the ABC transporter complex MelEDC-MsmX involved in melibiose, raffinose and stachyose import. Probably responsible for the translocation of the substrate across the membrane. The chain is Melibiose/raffinose/stachyose import permease protein MelC from Bacillus subtilis (strain 168).